A 288-amino-acid chain; its full sequence is MSQFSFTKMHGLGNSYIYVNMFEEQIPEEDLALVAEKVSNINTGIGADGMILICPSDVAPVKMRMFNNDGSEGKSCGNGLRCVAKYAYEHKLVEDTVFTIETLAGIVTAEVTVEEGKVTLAKIDMGAPRLTRAEIPMLGEGETPFIRENFLYNNHRYAFTAVSMGNPHAVIFVDDVEQAPLTTLGPVLETHEMFPERVNVEFIEILNEEEMNFRVWERGSGVTQACGTGACAAVVASILNGKMERGKEITVHLAGGDLMIAWIEEGNVLMKGPAEVICHGVYEYKIEA.

Asparagine 14 and asparagine 67 together coordinate substrate. Catalysis depends on cysteine 76, which acts as the Proton donor. Substrate contacts are provided by residues 77–78, asparagine 166, asparagine 199, and 217–218; these read GN and ER. Cysteine 226 functions as the Proton acceptor in the catalytic mechanism. 227–228 serves as a coordination point for substrate; it reads GT.

This sequence belongs to the diaminopimelate epimerase family. Homodimer.

It is found in the cytoplasm. It carries out the reaction (2S,6S)-2,6-diaminopimelate = meso-2,6-diaminopimelate. It functions in the pathway amino-acid biosynthesis; L-lysine biosynthesis via DAP pathway; DL-2,6-diaminopimelate from LL-2,6-diaminopimelate: step 1/1. In terms of biological role, catalyzes the stereoinversion of LL-2,6-diaminopimelate (L,L-DAP) to meso-diaminopimelate (meso-DAP), a precursor of L-lysine and an essential component of the bacterial peptidoglycan. This Bacillus cereus (strain AH820) protein is Diaminopimelate epimerase.